A 565-amino-acid polypeptide reads, in one-letter code: Urocanate hydratase (565 aa).

NAD(+) contacts are provided by residues 61–62, glutamine 139, 185–187, glutamate 205, arginine 210, 251–252, 272–276, 282–283, and tyrosine 331; these read GG, GMG, NA, QTSAH, and YL. The active site involves cysteine 419. The disordered stretch occupies residues 453-472; that stretch reads LDSGSVASPNRETESMRDGS. A compositionally biased stretch (basic and acidic residues) spans 463–472; the sequence is RETESMRDGS. Glycine 501 is an NAD(+) binding site.

It belongs to the urocanase family. NAD(+) is required as a cofactor.

It is found in the cytoplasm. It carries out the reaction 4-imidazolone-5-propanoate = trans-urocanate + H2O. It functions in the pathway amino-acid degradation; L-histidine degradation into L-glutamate; N-formimidoyl-L-glutamate from L-histidine: step 2/3. Its function is as follows. Catalyzes the conversion of urocanate to 4-imidazolone-5-propionate. The polypeptide is Urocanate hydratase (Pseudomonas syringae pv. syringae (strain B728a)).